The following is a 381-amino-acid chain: Chorismate synthase (381 aa).

Positions 41 and 47 each coordinate NADP(+). FMN is bound by residues 127-129 (RAS), 247-248 (QA), Gly-291, 306-310 (KPIPT), and Arg-332.

This sequence belongs to the chorismate synthase family. As to quaternary structure, homotetramer. Requires FMNH2 as cofactor.

It catalyses the reaction 5-O-(1-carboxyvinyl)-3-phosphoshikimate = chorismate + phosphate. It participates in metabolic intermediate biosynthesis; chorismate biosynthesis; chorismate from D-erythrose 4-phosphate and phosphoenolpyruvate: step 7/7. Functionally, catalyzes the anti-1,4-elimination of the C-3 phosphate and the C-6 proR hydrogen from 5-enolpyruvylshikimate-3-phosphate (EPSP) to yield chorismate, which is the branch point compound that serves as the starting substrate for the three terminal pathways of aromatic amino acid biosynthesis. This reaction introduces a second double bond into the aromatic ring system. This chain is Chorismate synthase, found in Anaeromyxobacter dehalogenans (strain 2CP-C).